The sequence spans 372 residues: Fork head domain-containing protein FD4 (372 aa).

Residues 12-103 (QKPPYSYISL…FDMFENGSLL (92 aa)) constitute a DNA-binding region (fork-head). 2 disordered regions span residues 225 to 245 (ESLITPDKPEHPSEDEDDEDD) and 261 to 281 (PTTPAASEEYMSASRSSRTED).

As to expression, expressed in early embryogenesis in 14 symmetrical pairs of segmentally arranged neuroblasts. Also, later in embryogenesis, in a cluster of cells in head region.

It localises to the nucleus. Functionally, involved in development during embryogenesis. In Drosophila melanogaster (Fruit fly), this protein is Fork head domain-containing protein FD4 (fd96Ca).